Reading from the N-terminus, the 69-residue chain is Small ribosomal subunit protein bS21 (69 aa).

The protein belongs to the bacterial ribosomal protein bS21 family.

The sequence is that of Small ribosomal subunit protein bS21 (rpsU) from Treponema pallidum (strain Nichols).